Consider the following 189-residue polypeptide: Cancer/testis antigen family 45 member A5 (189 aa).

Residues 1 to 23 (MTDKTEKVAVDPETVFKRPRECD) are compositionally biased toward basic and acidic residues. Disordered regions lie at residues 1–27 (MTDK…SPSY) and 82–118 (DGMM…SPKS).

It belongs to the CT45 family. As to expression, testis specific. Expressed in cancer cell lines.

It localises to the nucleus. The protein is Cancer/testis antigen family 45 member A5 of Homo sapiens (Human).